Reading from the N-terminus, the 1354-residue chain is MAAAALCCASRKSNKYNNEAGYEVYTISEDQLRLKQKMKDRKEGVQVEYITSRLIVLSCTSETSERKFVESLLKASQQIQNAHNKHIRVWNVSQRRHDISSSLDAIPFGWPSETAPSLEKLCTICKNLDQWMLEHPLNIAVIFCKGGLERCAIVVNAFMRFNAISATDDSVDDRFSMQRFSERFLGPDGPPSYKRYLGYFSSLLSGRISVNSDPLYLHNIILTFFEPINVFLKIYERLVPVYQSKTVALNKSSKFEMDGSLKLRGDIFFKCIVAASSPGSSTRCLFTCQLNTCALELHPINSEGYSVVRLHKEELDLIFNDKKIDNRVTVELVVSHTSGPTTIATAAVQSVHSLLPRNNSYETFELAQDDETNRSRLEVEYSEIRKKSTKSSKSANPINNNQEEEMPVGPPVPPKPSTPIMNGERLGEYGVGGHIGNGDVVPERRGILPASLREKINQKKELEGRATPSIEPDLVGRDRYDKASRCFSYVPAKSMQEAFERPRRTSFSRAIEKRENSVENVSQEEVARTEIPQSYQQNDISTPAKWDEQVEDAKQSALLEELARAPSAMQHNYWGNGEVDNVQVVDQAQRAVITPTSTLQRRPKPPARSGSYRTLNDDAYCSDMDELCDPEYYLNYNSNTAPLPPPRRQEQHAGTRSVQLPRKKMNFDAVTDPLDDVLESTKRLGSAYSVGDVRGGQQQQQEQHNASNDFNFSNTLNNTPTDYRQHYRNRNCQSVTTPRNHHFSTPSREQEADAADTWLSGKLKKVRSKRDIDPDIVRRRTQEKMLLEELKDSAANNDENQHNLPNGHARGAGLQNIDPLAEFRREEERLRNTRSPYGEERWRGRMRGKPPTPPPRESSASPVNSLPRGTPAHHMDRQRHNQSVPLPMHHRQFDEDFDVNSLFNFSHDPRQQSTTLERGGRSLSRGARIQDAYYASQQDLSANNRFNSGQERVAAAIYRAETAHRDMYASGTINRAETPGRYFPENSAVLERSSTPSFPVSRATPLPFHPLLYNNGERGGSGHAAGGGGGGHNGYSTMNNRSASPRLFGGSSTLSRRSSVNSVDTSEIIHHHPLFVKDTSKYWYKPTISREQAINMLRDKPPGTFVVRDSNSFPGAFGLALKVSTPPPGVNPGDGSELVRHFLIEPSPKGVKLKGCNNEPVFGSLSALVYQHSITALALPTKLVLPDFDPAATPEHLSATQALLEQGAACNVVYVGSVDVESLTGNECVKRSIATCSQRAINGDSRAVSVHFKVSSQGVTLTDNTRKVFFRRHFNVQSVIFAGMDPIERRFENTRALGFHDGCIAQARLFAFVARIPSSSENACHVFAELEPEQPGSAVVNFINKVMLAQKNRS.

The 170-residue stretch at 38-207 (MKDRKEGVQV…GYFSSLLSGR (170 aa)) folds into the Phosphatase tensin-type domain. C144 acts as the Phosphocysteine intermediate in catalysis. A C2 tensin-type domain is found at 212 to 337 (SDPLYLHNII…VTVELVVSHT (126 aa)). 7 disordered regions span residues 380-442 (EYSE…DVVP), 597-616 (STLQ…RTLN), 638-660 (SNTA…SVQL), 692-720 (DVRG…NNTP), 734-754 (SVTT…EADA), 794-879 (AANN…DRQR), and 1015-1035 (NGER…HNGY). Residues 391 to 401 (SSKSANPINNN) show a composition bias toward polar residues. A compositionally biased stretch (pro residues) spans 408-417 (VGPPVPPKPS). 3 stretches are compositionally biased toward polar residues: residues 704–720 (HNAS…NNTP), 734–747 (SVTT…STPS), and 794–804 (AANNDENQHNL). The span at 821–843 (AEFRREEERLRNTRSPYGEERWR) shows a compositional bias: basic and acidic residues. Residues 1017–1033 (ERGGSGHAAGGGGGGHN) show a composition bias toward gly residues. Positions 1083–1187 (WYKPTISREQ…ALPTKLVLPD (105 aa)) constitute an SH2 domain. Residues 1209–1353 (ACNVVYVGSV…NKVMLAQKNR (145 aa)) enclose the PTB domain.

Belongs to the PTEN phosphatase protein family. In terms of assembly, may interact (via SH2 domain) with receptor svh-2 (when tyrosine-phosphorylated). May interact (via C-terminus) with integrin pat-3. Expressed in ventral motor neurons, including ventral and dorsal D-type neurons, and in a subset of cells in the head.

The protein localises to the cell projection. It is found in the axon. It carries out the reaction O-phospho-L-tyrosyl-[protein] + H2O = L-tyrosyl-[protein] + phosphate. In terms of biological role, probable phosphatase which regulates axon regeneration after injury by linking the svh-2 and integrin signaling pathways. Functionally, not involved in axon regeneration after injury. The chain is Tensin homolog from Caenorhabditis elegans.